We begin with the raw amino-acid sequence, 575 residues long: Serine/threonine-protein kinase Pink1, mitochondrial (575 aa).

A mitochondrion-targeting transit peptide spans M1–F51. Residues L52–R94 lie on the Mitochondrial intermembrane side of the membrane. Residues L95 to L118 form a helical membrane-spanning segment. Residues T119–N575 are Cytoplasmic-facing. K193 is a binding site for ATP. S202 and S204 each carry phosphoserine; by autocatalysis. E214 contributes to the Mg(2+) binding site. The residue at position 305 (T305) is a Phosphothreonine; by autocatalysis. The active-site Proton acceptor is D334. The Mg(2+) site is built by N339 and D357.

Belongs to the protein kinase superfamily. Ser/Thr protein kinase family. It depends on Mg(2+) as a cofactor. Post-translationally, proteolytically cleaved. In healthy cells, the precursor is continuously imported into mitochondria where it is proteolytically cleaved into its short form by the mitochondrial rhomboid protease rho-7 (8231301). The short form is then released into the cytosol where it rapidly undergoes proteasome-dependent degradation. In unhealthy cells, when cellular stress conditions lead to the loss of mitochondrial membrane potential, mitochondrial import is impaired leading to the precursor accumulating on the outer mitochondrial membrane (OMM). Autophosphorylated. Autophosphorylated on Ser-202, which activates kinase activity. Loss of mitochondrial membrane potential results in the precursor accumulating on the outer mitochondrial membrane (OMM) where it is activated by autophosphorylation at Ser-202. Autophosphorylation is sufficient and essential for selective recruitment of park to depolarized mitochondria, likely via Pink1-dependent phosphorylation of polyubiquitin chains. Also autophosphorylated at Ser-204 and Thr-305.

The protein resides in the mitochondrion outer membrane. It is found in the mitochondrion inner membrane. It localises to the cytoplasm. The protein localises to the cytosol. The catalysed reaction is L-seryl-[protein] + ATP = O-phospho-L-seryl-[protein] + ADP + H(+). The enzyme catalyses L-threonyl-[protein] + ATP = O-phospho-L-threonyl-[protein] + ADP + H(+). Its function is as follows. Acts as a serine/threonine-protein kinase. Exhibits a substrate preference for proline at position P+1 and a general preference at several residues for basic residues such as arginine. Also exhibits moderate preferences for a phosphotyrosine at position P-3 and a tryptophan at P-5. Critical to mitochondrial homeostasis it mediates several pathways that maintain mitochondrial health and function Protects against mitochondrial dysfunction during cellular stress by phosphorylating mitochondrial proteins such as park and likely Drp1, to coordinate mitochondrial quality control mechanisms that remove and replace dysfunctional mitochondrial components. Depending on the severity of mitochondrial damage and/or dysfunction, activity ranges from preventing apoptosis and stimulating mitochondrial biogenesis to regulating mitochondrial dynamics and eliminating severely damaged mitochondria via mitophagy. Appears to be particularly important in maintaining the physiology and function of cells with high energy demands that are undergoing stress or altered metabolic environment, including spermatids, muscle cells and neurons such as the dopaminergic (DA) neurons. Mediates the translocation and activation of park at the outer membrane (OMM) of dysfunctional/depolarized mitochondria. At the OMM of damaged mitochondria, phosphorylates pre-existing polyubiquitin chains, the Pink1-phosphorylated polyubiquitin then recruits park from the cytosol to the OMM where park is fully activated by phosphorylation at 'Ser-94' by Pink1. When cellular stress results in irreversible mitochondrial damage, functions with park to promote the clearance of dysfunctional and/or depolarized mitochondria by selective autophagy (mitophagy). The Pink1-park pathway also promotes fission and/or inhibits fusion of damaged mitochondria, by phosphorylating and thus promoting the park-dependent degradation of proteins involved in mitochondrial fusion/fission such as Marf, Opa1 and fzo. This prevents the refusion of unhealthy mitochondria with the mitochondrial network or initiates mitochondrial fragmentation facilitating their later engulfment by autophagosomes. Also likely to promote mitochondrial fission independently of park and Atg7-mediated mitophagy, via the phosphorylation and activation of Drp1. Regulates motility of damaged mitochondria by phosphorylating Miro which likely promotes its park-dependent degradation by the proteasome; in motor neurons, this inhibits mitochondrial intracellular anterograde transport along the axons which probably increases the chance of the mitochondria being eliminated in the soma. The Pink1-park pathway is also involved in mitochondrial regeneration processes such as promoting mitochondrial biogenesis, activating localized mitochondrial repair, promoting selective turnover of mitochondrial proteins and initiating the mitochondrial import of endogenous proteins. Involved in mitochondrial biogenesis by promoting the park-dependent ubiquitination of transcriptional repressor Paris which leads to its subsequent proteasomal degradation and allows activation of the transcription factor srl. Functions with park to promote localized mitochondrial repair by activating the translation of specific nuclear-encoded mitochondrial RNAs (nc-mtRNAs) on the mitochondrial surface, including several key electron transport chain component nc-mtRNAs. During oogenesis, phosphorylates and inactivates larp on the membrane of defective mitochondria, thus impairing local translation and mtDNA replication and consequently, reducing transmission of deleterious mtDNA mutations to the mature oocyte. Phosphorylates the mitochondrial acyl-CoA dehydrogenase Mcad, and appears to be important for maintaining fatty acid and amino acid metabolism via a mechanism that is independent of it's role in maintaining production of ATP. This chain is Serine/threonine-protein kinase Pink1, mitochondrial, found in Pediculus humanus subsp. corporis (Body louse).